The chain runs to 95 residues: Aspartyl/glutamyl-tRNA(Asn/Gln) amidotransferase subunit C (95 aa).

The protein belongs to the GatC family. As to quaternary structure, heterotrimer of A, B and C subunits.

It catalyses the reaction L-glutamyl-tRNA(Gln) + L-glutamine + ATP + H2O = L-glutaminyl-tRNA(Gln) + L-glutamate + ADP + phosphate + H(+). It carries out the reaction L-aspartyl-tRNA(Asn) + L-glutamine + ATP + H2O = L-asparaginyl-tRNA(Asn) + L-glutamate + ADP + phosphate + 2 H(+). Its function is as follows. Allows the formation of correctly charged Asn-tRNA(Asn) or Gln-tRNA(Gln) through the transamidation of misacylated Asp-tRNA(Asn) or Glu-tRNA(Gln) in organisms which lack either or both of asparaginyl-tRNA or glutaminyl-tRNA synthetases. The reaction takes place in the presence of glutamine and ATP through an activated phospho-Asp-tRNA(Asn) or phospho-Glu-tRNA(Gln). In Geotalea uraniireducens (strain Rf4) (Geobacter uraniireducens), this protein is Aspartyl/glutamyl-tRNA(Asn/Gln) amidotransferase subunit C.